Here is a 410-residue protein sequence, read N- to C-terminus: Exopolygalacturonase (410 aa).

The first 22 residues, 1-22 (MACIDNAMRALFLLALFCVVHG), serve as a signal peptide directing secretion. Residues Asn89 and Asn201 are each glycosylated (N-linked (GlcNAc...) asparagine). PbH1 repeat units lie at residues 192-218 (CKDM…HMGD), 219-240 (SSGV…SIGP), 242-262 (TSKV…SIGS), 272-293 (VTDI…RIKA), and 337-377 (ASKV…TMDD). Catalysis depends on Asp233, which acts as the Proton donor. An intrachain disulfide couples Cys235 to Cys252. Residue Asn246 is glycosylated (N-linked (GlcNAc...) asparagine). Residue His256 is part of the active site. Asn349 is a glycosylation site (N-linked (GlcNAc...) asparagine). A disulfide bond links Cys364 and Cys370. A glycan (N-linked (GlcNAc...) asparagine) is linked at Asn387. A disulfide bridge connects residues Cys393 and Cys409.

The protein belongs to the glycosyl hydrolase 28 family. As to expression, pollen.

The protein localises to the secreted. Its subcellular location is the cell wall. It carries out the reaction [(1-&gt;4)-alpha-D-galacturonosyl](n) + H2O = alpha-D-galacturonate + [(1-&gt;4)-alpha-D-galacturonosyl](n-1). In terms of biological role, may function in depolymerizing pectin during pollen development, germination, and tube growth. Acts as an exo-polygalacturonase. This chain is Exopolygalacturonase (PG2C), found in Zea mays (Maize).